A 340-amino-acid polypeptide reads, in one-letter code: Holliday junction branch migration complex subunit RuvB (340 aa).

The interval 4–184 (TDRIVGGQSL…FGIVQRLEFY (181 aa)) is large ATPase domain (RuvB-L). ATP is bound by residues arginine 24, glycine 65, lysine 68, threonine 69, threonine 70, 131–133 (EDF), arginine 174, tyrosine 184, and arginine 221. Threonine 69 contacts Mg(2+). The small ATPAse domain (RuvB-S) stretch occupies residues 185–255 (SIEELAQIVT…IADLALNLLE (71 aa)). The segment at 258-340 (PLGLDKMDRR…TMPERNLEDE (83 aa)) is head domain (RuvB-H). Residues arginine 294, arginine 313, and arginine 318 each coordinate DNA.

This sequence belongs to the RuvB family. Homohexamer. Forms an RuvA(8)-RuvB(12)-Holliday junction (HJ) complex. HJ DNA is sandwiched between 2 RuvA tetramers; dsDNA enters through RuvA and exits via RuvB. An RuvB hexamer assembles on each DNA strand where it exits the tetramer. Each RuvB hexamer is contacted by two RuvA subunits (via domain III) on 2 adjacent RuvB subunits; this complex drives branch migration. In the full resolvosome a probable DNA-RuvA(4)-RuvB(12)-RuvC(2) complex forms which resolves the HJ.

It is found in the cytoplasm. The enzyme catalyses ATP + H2O = ADP + phosphate + H(+). Functionally, the RuvA-RuvB-RuvC complex processes Holliday junction (HJ) DNA during genetic recombination and DNA repair, while the RuvA-RuvB complex plays an important role in the rescue of blocked DNA replication forks via replication fork reversal (RFR). RuvA specifically binds to HJ cruciform DNA, conferring on it an open structure. The RuvB hexamer acts as an ATP-dependent pump, pulling dsDNA into and through the RuvAB complex. RuvB forms 2 homohexamers on either side of HJ DNA bound by 1 or 2 RuvA tetramers; 4 subunits per hexamer contact DNA at a time. Coordinated motions by a converter formed by DNA-disengaged RuvB subunits stimulates ATP hydrolysis and nucleotide exchange. Immobilization of the converter enables RuvB to convert the ATP-contained energy into a lever motion, pulling 2 nucleotides of DNA out of the RuvA tetramer per ATP hydrolyzed, thus driving DNA branch migration. The RuvB motors rotate together with the DNA substrate, which together with the progressing nucleotide cycle form the mechanistic basis for DNA recombination by continuous HJ branch migration. Branch migration allows RuvC to scan DNA until it finds its consensus sequence, where it cleaves and resolves cruciform DNA. The polypeptide is Holliday junction branch migration complex subunit RuvB (Hydrogenovibrio crunogenus (strain DSM 25203 / XCL-2) (Thiomicrospira crunogena)).